The sequence spans 163 residues: uncharacterized protein (163 aa).

This is an uncharacterized protein from Shigella flexneri.